The following is a 359-amino-acid chain: Glutamine synthetase (359 aa).

Residues 28–107 (VMAEYIWIDG…VLAACYTADG (80 aa)) enclose the GS beta-grasp domain. Residues 114–359 (HRDACAKLLE…GIITETMFEH (246 aa)) enclose the GS catalytic domain. Position 273 is a phosphoserine (S273). T303 is modified (phosphothreonine). S305 bears the Phosphoserine mark.

This sequence belongs to the glutamine synthetase family. In terms of assembly, homooctamer.

It is found in the cytoplasm. It carries out the reaction L-glutamate + NH4(+) + ATP = L-glutamine + ADP + phosphate + H(+). In Schizosaccharomyces pombe (strain 972 / ATCC 24843) (Fission yeast), this protein is Glutamine synthetase (gln1).